The chain runs to 547 residues: uncharacterized protein (547 aa).

Positions 1-37 are disordered; it reads MSAASSAIPKRSDPRLLDQKKSAKSTLPKNTPENGVS. Positions 10 to 21 are enriched in basic and acidic residues; it reads KRSDPRLLDQKK. The span at 24–37 shows a compositional bias: polar residues; sequence KSTLPKNTPENGVS. C3H1-type zinc fingers lie at residues 41–67 and 68–95; these read NLQHVPCKFFRNGTCTAGENCPFSHSL and ETERPICKYFLKGNCKFGPKCALSHALP. Residues 132–176 are disordered; it reads SPSLSSKTMKNPADKANNTTATDVRGNTATSPYFPFSRSPGRHSG. Polar residues predominate over residues 147–162; that stretch reads ANNTTATDVRGNTATS. Residue Ser-343 is modified to Phosphoserine. Tyr-344 is modified (phosphotyrosine). 6 positions are modified to phosphoserine: Ser-353, Ser-355, Ser-483, Ser-489, Ser-495, and Ser-499. Thr-502 bears the Phosphothreonine mark. Residues 526-536 show a composition bias toward polar residues; it reads VANSSPPWNST. The interval 526–547 is disordered; sequence VANSSPPWNSTVEEETPFQMDD. Over residues 537–547 the composition is skewed to acidic residues; that stretch reads VEEETPFQMDD.

This is an uncharacterized protein from Schizosaccharomyces pombe (strain 972 / ATCC 24843) (Fission yeast).